The primary structure comprises 160 residues: Nascent polypeptide-associated complex subunit beta (160 aa).

Disordered regions lie at residues 16-36 and 118-160; these read GGKGTPRRKVKKVHKSSGTDD and ESYQ…TEVE. A compositionally biased stretch (basic residues) spans 20–30; the sequence is TPRRKVKKVHK. Positions 33-98 constitute an NAC-A/B domain; it reads GTDDKKLQTA…GEDKELTELV (66 aa). Residues 124-134 show a composition bias toward basic and acidic residues; sequence QKEKGEDGDKK. Acidic residues predominate over residues 135 to 145; sequence DDDDEDDDDIP.

It belongs to the NAC-beta family. As to quaternary structure, part of the nascent polypeptide-associated complex (NAC), consisting of EGD2 and EGD1. NAC associates with ribosomes via EGD1.

The protein localises to the cytoplasm. It is found in the nucleus. Its function is as follows. Component of the nascent polypeptide-associated complex (NAC), a dynamic component of the ribosomal exit tunnel, protecting the emerging polypeptides from interaction with other cytoplasmic proteins to ensure appropriate nascent protein targeting. The NAC complex also promotes mitochondrial protein import by enhancing productive ribosome interactions with the outer mitochondrial membrane and blocks the inappropriate interaction of ribosomes translating non-secretory nascent polypeptides with translocation sites in the membrane of the endoplasmic reticulum. EGD1 may act as a transcription factor that exert a negative effect on the expression of several genes that are transcribed by RNA polymerase II. The sequence is that of Nascent polypeptide-associated complex subunit beta (EGD1) from Phaeosphaeria nodorum (strain SN15 / ATCC MYA-4574 / FGSC 10173) (Glume blotch fungus).